The chain runs to 181 residues: ECF RNA polymerase sigma factor RpoE (181 aa).

Residues leucine 29–arginine 96 form a sigma-70 factor domain-2 region. The Interaction with polymerase core subunit RpoC motif lies at glutamate 53–glutamine 56. Residues alanine 129–glutamine 178 are sigma-70 factor domain-4. The segment at residues histidine 151–arginine 170 is a DNA-binding region (H-T-H motif).

This sequence belongs to the sigma-70 factor family. ECF subfamily. Interacts transiently with the RNA polymerase catalytic core formed by RpoA, RpoB, RpoC and RpoZ (2 alpha, 1 beta, 1 beta' and 1 omega subunit) to form the RNA polymerase holoenzyme that can initiate transcription. Forms a 1:1 complex (via sigma-70 factor domain 4) with anti-sigma factor ChrR; this inhibits the interaction of RpoE with the RNA polymerase catalytic core.

Sigma factors are initiation factors that promote the attachment of RNA polymerase to specific initiation sites and are then released. Extracytoplasmic function (ECF) sigma factors are held in an inactive form by a cognate anti-sigma factor until released. Sigma-E controls a transcriptional response to singlet oxygen, a by-product of photosynthesis; its continuous activity requires constant exposure to singlet oxygen. The regulon has about 180 genes that protect against or repair damage induced by singlet oxygen, including itself and rpoH2, a heat shock-responsive sigma factor. This chain is ECF RNA polymerase sigma factor RpoE (rpoE), found in Cereibacter sphaeroides (strain ATCC 17023 / DSM 158 / JCM 6121 / CCUG 31486 / LMG 2827 / NBRC 12203 / NCIMB 8253 / ATH 2.4.1.) (Rhodobacter sphaeroides).